The sequence spans 184 residues: Probable RNA 2'-phosphotransferase (184 aa).

The protein belongs to the KptA/TPT1 family.

Functionally, removes the 2'-phosphate from RNA via an intermediate in which the phosphate is ADP-ribosylated by NAD followed by a presumed transesterification to release the RNA and generate ADP-ribose 1''-2''-cyclic phosphate (APPR&gt;P). May function as an ADP-ribosylase. This Escherichia coli (strain K12 / MC4100 / BW2952) protein is Probable RNA 2'-phosphotransferase.